The chain runs to 161 residues: RNA pyrophosphohydrolase (161 aa).

A Nudix hydrolase domain is found at 7-149 (KYRPCVGIML…KKEVYKTVIE (143 aa)). A Nudix box motif is present at residues 40 to 61 (GGIDDGEKLEQAALRELLEEVG).

This sequence belongs to the Nudix hydrolase family. RppH subfamily. A divalent metal cation serves as cofactor.

Accelerates the degradation of transcripts by removing pyrophosphate from the 5'-end of triphosphorylated RNA, leading to a more labile monophosphorylated state that can stimulate subsequent ribonuclease cleavage. The chain is RNA pyrophosphohydrolase from Wolbachia sp. subsp. Brugia malayi (strain TRS).